The primary structure comprises 353 residues: Melanin-concentrating hormone receptor 1 (353 aa).

The Extracellular segment spans residues 1-45 (MDLQASLLSTGPNASNISDGQDNFTLAGPPPRTRSVSYINIIMPS). 3 N-linked (GlcNAc...) asparagine glycosylation sites follow: asparagine 13, asparagine 16, and asparagine 23. Residues 46–66 (VFGTICLLGIVGNSTVIFAVV) traverse the membrane as a helical segment. Residues 67–79 (KKSKLHWCSNVPD) lie on the Cytoplasmic side of the membrane. Residues 80-100 (IFIINLSVVDLLFLLGMPFMI) form a helical membrane-spanning segment. Residues 101-116 (HQLMGNGVWHFGETMC) are Extracellular-facing. Cysteine 116 and cysteine 194 are oxidised to a cystine. A helical transmembrane segment spans residues 117 to 139 (TLITAMDANSQFTSTYILTAMAI). At 140-161 (DRYLATVHPISSTKFRKPSMAT) the chain is on the cytoplasmic side. The chain crosses the membrane as a helical span at residues 162–182 (LVICLLWALSFISITPVWLYA). The Extracellular portion of the chain corresponds to 183–204 (RLIPFPGGAVGCGIRLPNPDTD). Residues 205–225 (LYWFTLYQFFLAFALPFVVIT) form a helical membrane-spanning segment. The Cytoplasmic portion of the chain corresponds to 226–256 (AAYVKILQRMTSSVAPASQRSIRLRTKRVTR). A helical membrane pass occupies residues 257–277 (TAIAICLVFFVCWAPYYVLQL). The Extracellular portion of the chain corresponds to 278–294 (TQLSISRPTLTFVYLYN). A helical transmembrane segment spans residues 295–315 (AAISLGYANSCLNPFVYIVLC). Residues 316–353 (ETFRKRLVLSVKPAAQGQLRTVSNAQTADEERTESKGT) lie on the Cytoplasmic side of the membrane.

The protein belongs to the G-protein coupled receptor 1 family. In terms of assembly, interacts with NCDN. As to expression, expressed predominantly in the brain. Expression in brain is negatively regulated by leptin. Also found in the epithelium of the tongue and kidney.

Its subcellular location is the cell membrane. Receptor for melanin-concentrating hormone, coupled to both G proteins that inhibit adenylyl cyclase and G proteins that activate phosphoinositide hydrolysis. In Mus musculus (Mouse), this protein is Melanin-concentrating hormone receptor 1.